The chain runs to 98 residues: Large ribosomal subunit protein uL23 (98 aa).

Belongs to the universal ribosomal protein uL23 family. As to quaternary structure, part of the 50S ribosomal subunit. Contacts protein L29, and trigger factor when it is bound to the ribosome.

In terms of biological role, one of the early assembly proteins it binds 23S rRNA. One of the proteins that surrounds the polypeptide exit tunnel on the outside of the ribosome. Forms the main docking site for trigger factor binding to the ribosome. The chain is Large ribosomal subunit protein uL23 from Rickettsia canadensis (strain McKiel).